The primary structure comprises 282 residues: Shikimate dehydrogenase (NADP(+)) (282 aa).

Shikimate contacts are provided by residues 18–20 (SRS) and T65. The active-site Proton acceptor is the K69. The shikimate site is built by N90 and D106. Residues 134-138 (GAGGA), 158-163 (NRTAAR), and I223 each bind NADP(+). Y225 provides a ligand contact to shikimate. Residue G246 coordinates NADP(+).

It belongs to the shikimate dehydrogenase family. Homodimer.

It carries out the reaction shikimate + NADP(+) = 3-dehydroshikimate + NADPH + H(+). The protein operates within metabolic intermediate biosynthesis; chorismate biosynthesis; chorismate from D-erythrose 4-phosphate and phosphoenolpyruvate: step 4/7. Functionally, involved in the biosynthesis of the chorismate, which leads to the biosynthesis of aromatic amino acids. Catalyzes the reversible NADPH linked reduction of 3-dehydroshikimate (DHSA) to yield shikimate (SA). This is Shikimate dehydrogenase (NADP(+)) from Methylobacterium radiotolerans (strain ATCC 27329 / DSM 1819 / JCM 2831 / NBRC 15690 / NCIMB 10815 / 0-1).